Reading from the N-terminus, the 512-residue chain is Serine/threonine-protein kinase BSK1 (512 aa).

Gly2 is lipidated: N-myristoyl glycine. Residues Phe8–Gly48 are disordered. Over residues Gly38–Gly48 the composition is skewed to gly residues. The 256-residue stretch at Asp76 to Gln331 folds into the Protein kinase domain. Residues Ser82–Val90 and Lys104 contribute to the ATP site. Asp198 acts as the Proton acceptor in catalysis. Ser230 is modified (phosphoserine). Residues Ala483 to Gly508 adopt a coiled-coil conformation.

It belongs to the protein kinase superfamily. Ser/Thr protein kinase family. Interacts with BRI1. Interacts with ASK7/BIN2, BSK5, BSK6, BSK8 and BSK11. Interacts with FLS2. Phosphorylated at Ser-230 by BRI1 upon brassinolide (BL) treatment. Phosphorylation at Ser-230 weakens the interaction between BSK1 and BRI1. Phosphorylated by ASK7/BIN2 and ASK9/BIL2.

It is found in the cell membrane. The catalysed reaction is L-seryl-[protein] + ATP = O-phospho-L-seryl-[protein] + ADP + H(+). It carries out the reaction L-threonyl-[protein] + ATP = O-phospho-L-threonyl-[protein] + ADP + H(+). In terms of biological role, serine/threonine kinase that acts as a positive regulator of brassinosteroid (BR) signaling downstream of the receptor kinase BRI1. Mediates signal transduction from BRI1 by functioning as substrate of BRI1. Functions as a positive regulator of plant immunity. May be involved in the regulation of pattern-triggered immunity (PTI) downstream of the flagellin receptor FLS2. Possesses kinase activity in vitro. Kinase activity is required for its function in innate immunity. This chain is Serine/threonine-protein kinase BSK1, found in Arabidopsis thaliana (Mouse-ear cress).